The chain runs to 241 residues: Octanoyltransferase (241 aa).

Positions 43 to 228 constitute a BPL/LPL catalytic domain; that stretch reads ADTPDEIWLV…RLTANLDGSP (186 aa). Residues 83–90, 159–161, and 172–174 contribute to the substrate site; these read RGGQITYH, ALG, and GVS. The active-site Acyl-thioester intermediate is the C190.

This sequence belongs to the LipB family.

It localises to the cytoplasm. It carries out the reaction octanoyl-[ACP] + L-lysyl-[protein] = N(6)-octanoyl-L-lysyl-[protein] + holo-[ACP] + H(+). The protein operates within protein modification; protein lipoylation via endogenous pathway; protein N(6)-(lipoyl)lysine from octanoyl-[acyl-carrier-protein]: step 1/2. In terms of biological role, catalyzes the transfer of endogenously produced octanoic acid from octanoyl-acyl-carrier-protein onto the lipoyl domains of lipoate-dependent enzymes. Lipoyl-ACP can also act as a substrate although octanoyl-ACP is likely to be the physiological substrate. This is Octanoyltransferase from Paraburkholderia phytofirmans (strain DSM 17436 / LMG 22146 / PsJN) (Burkholderia phytofirmans).